A 113-amino-acid polypeptide reads, in one-letter code: Protein RALF-like 31 (113 aa).

An N-terminal signal peptide occupies residues 1-21 (MFNSTALVIFAILFLLISADA). The propeptide at 22 to 58 (FPIPSPNGEIDAMLIRNSIIGEDEDLMPTEISRRVLM) is removed in mature form. Disulfide bonds link Cys-76/Cys-86 and Cys-98/Cys-104.

The protein belongs to the plant rapid alkalinization factor (RALF) family. In terms of processing, proteolytically cleaved, probably by S1P, a subtilisin-like serine protease (subtilase).

The protein localises to the secreted. Its function is as follows. Cell signaling peptide that may regulate plant stress, growth, and development. Mediates a rapid alkalinization of extracellular space by mediating a transient increase in the cytoplasmic Ca(2+) concentration leading to a calcium-dependent signaling events through a cell surface receptor and a concomitant activation of some intracellular mitogen-activated protein kinases. This chain is Protein RALF-like 31 (RALFL31), found in Arabidopsis thaliana (Mouse-ear cress).